The following is an 822-amino-acid chain: General transcription factor 3C polypeptide 4 (822 aa).

Position 1 is an N-acetylmethionine (M1). Positions 1–41 are disordered; it reads MNTADQARVGPADDGPAPSGEEEGEGGGEAGGKEPAADAAP. S19 carries the phosphoserine modification. K225 is covalently cross-linked (Glycyl lysine isopeptide (Lys-Gly) (interchain with G-Cter in SUMO2)). S604 and S611 each carry phosphoserine. Positions 608–663 are disordered; the sequence is LVDSPGMGNADDEQQEEGTSSKQVVKQGLQERSKEGDVEEPTDDSLPTTGDAGGRE. K629 is covalently cross-linked (Glycyl lysine isopeptide (Lys-Gly) (interchain with G-Cter in SUMO2)). The residue at position 652 (S652) is a Phosphoserine.

It belongs to the TFIIIC subunit 4 family. As to quaternary structure, part of the TFIIIC subcomplex TFIIIC2, consisting of six subunits, GTF3C1, GTF3C2, GTF3C3, GTF3C4, GTF3C5 and GTF3C6. Interacts with BRF1, GTF3C1, GTF3C2, GTF3C5, GTF3C6, POLR3C and POLR3F.

It is found in the nucleus. The catalysed reaction is L-lysyl-[protein] + acetyl-CoA = N(6)-acetyl-L-lysyl-[protein] + CoA + H(+). In terms of biological role, essential for RNA polymerase III to make a number of small nuclear and cytoplasmic RNAs, including 5S RNA, tRNA, and adenovirus-associated (VA) RNA of both cellular and viral origin. Has histone acetyltransferase activity (HAT) with unique specificity for free and nucleosomal H3. May cooperate with GTF3C5 in facilitating the recruitment of TFIIIB and RNA polymerase through direct interactions with BRF1, POLR3C and POLR3F. May be localized close to the A box. In Homo sapiens (Human), this protein is General transcription factor 3C polypeptide 4 (GTF3C4).